Reading from the N-terminus, the 156-residue chain is Small ribosomal subunit protein uS7 (156 aa).

This sequence belongs to the universal ribosomal protein uS7 family. Part of the 30S ribosomal subunit. Contacts proteins S9 and S11.

In terms of biological role, one of the primary rRNA binding proteins, it binds directly to 16S rRNA where it nucleates assembly of the head domain of the 30S subunit. Is located at the subunit interface close to the decoding center, probably blocks exit of the E-site tRNA. This is Small ribosomal subunit protein uS7 from Salinispora tropica (strain ATCC BAA-916 / DSM 44818 / JCM 13857 / NBRC 105044 / CNB-440).